The chain runs to 282 residues: GDT1-like protein 4 (282 aa).

Positions 1 to 26 are cleaved as a signal peptide; that stretch reads MARRVSTTRLLLLLLLVAAAAAAAAA. The next 6 membrane-spanning stretches (helical) occupy residues 67 to 87, 106 to 126, 138 to 158, 189 to 209, 227 to 247, and 259 to 279; these read AGLG…VSEI, TVLS…TGLG, TNSA…YIAW, IFSR…FLAE, AVGV…FAVV, and GTVA…SYFY.

The protein belongs to the GDT1 family.

It localises to the membrane. The chain is GDT1-like protein 4 from Oryza sativa subsp. japonica (Rice).